Here is a 219-residue protein sequence, read N- to C-terminus: Ran-specific GTPase-activating protein 1 (219 aa).

3 stretches are compositionally biased toward basic and acidic residues: residues 1 to 12 (MAEVERKEEQAK), 33 to 45 (AVGDGKEGGEAKK), and 57 to 72 (PRKDEGKGGEERDNID). Residues 1–72 (MAEVERKEEQ…KGGEERDNID (72 aa)) form a disordered region. A RanBD1 domain is found at 70-210 (NIDAAEVVEK…YDLGRAHNEK (141 aa)).

Belongs to the RANBP1 family.

The protein localises to the cytoplasm. Its subcellular location is the nucleus. Important for the export of protein containing nuclear export signal (NES) out of the nucleus. The protein is Ran-specific GTPase-activating protein 1 (YRB1) of Encephalitozoon cuniculi (strain GB-M1) (Microsporidian parasite).